The sequence spans 351 residues: NADP-dependent isopropanol dehydrogenase (351 aa).

Zn(2+) contacts are provided by C37, H59, E60, and D150. Residues 175–178, 198–200, Y218, 265–267, and K340 contribute to the NADP(+) site; these read IGAV, GSR, and INY.

Belongs to the zinc-containing alcohol dehydrogenase family. As to quaternary structure, homotetramer. Zn(2+) is required as a cofactor.

It carries out the reaction propan-2-ol + NADP(+) = acetone + NADPH + H(+). Its function is as follows. Alcohol dehydrogenase with a preference for medium chain secondary alcohols, such as 2-butanol and isopropanol. Has very low activity with primary alcohols, such as ethanol. Under physiological conditions, the enzyme reduces aldehydes and 2-ketones to produce secondary alcohols. Is active with acetaldehyde and propionaldehyde. This is NADP-dependent isopropanol dehydrogenase (adh) from Clostridium beijerinckii (Clostridium MP).